The chain runs to 246 residues: Cell division protein ZapD (246 aa).

Belongs to the ZapD family. Interacts with FtsZ.

The protein resides in the cytoplasm. Functionally, cell division factor that enhances FtsZ-ring assembly. Directly interacts with FtsZ and promotes bundling of FtsZ protofilaments, with a reduction in FtsZ GTPase activity. The protein is Cell division protein ZapD of Vibrio vulnificus (strain CMCP6).